The sequence spans 1236 residues: Chitinase-like protein PB1E7.04c (1236 aa).

Positions 1–19 (MRLISSLLLLVYSARLALS) are cleaved as a signal peptide. N-linked (GlcNAc...) asparagine glycans are attached at residues Asn21, Asn24, Asn54, Asn123, Asn225, Asn237, Asn255, Asn267, Asn277, Asn288, and Asn309. The GH18 domain maps to 26-325 (TAVLGYWGSN…EAIHKILDTK (300 aa)). Disordered stretches follow at residues 326–367 (SKHS…TSSA), 449–497 (VSSI…QSTL), and 584–625 (TSSP…STIL). The segment covering 339 to 351 (QGLESTSSIALNP) has biased composition (polar residues). Over residues 352–367 (TSSISSTSSSSSTSSA) the composition is skewed to low complexity. 5 N-linked (GlcNAc...) asparagine glycosylation sites follow: Asn715, Asn737, Asn768, Asn786, and Asn813. Disordered regions lie at residues 804-836 (ISTS…LAAN), 868-927 (TTAL…TSSS), 946-979 (TPTS…SSIA), and 1125-1159 (AASG…TPSN). Over residues 810-821 (NEYNTSFHAPTV) the composition is skewed to polar residues. Positions 822–832 (SSTTSSSSTTS) are enriched in low complexity. Positions 1125–1156 (AASGSSTVTSSATASSSSSAATTADSSVTTDT) are enriched in low complexity.

This sequence belongs to the glycosyl hydrolase 18 family. Chitinase class III subfamily.

It is found in the secreted. The sequence is that of Chitinase-like protein PB1E7.04c from Schizosaccharomyces pombe (strain 972 / ATCC 24843) (Fission yeast).